The chain runs to 190 residues: DNA-invertase hin (190 aa).

Residues alanine 2 to glycine 135 enclose the Resolvase/invertase-type recombinase catalytic domain. Serine 10 functions as the O-(5'-phospho-DNA)-serine intermediate in the catalytic mechanism. Residues arginine 162–proline 181 constitute a DNA-binding region (H-T-H motif).

Belongs to the site-specific recombinase resolvase family.

Its function is as follows. A DNA fragment of approximately 900 base pairs, adjacent to the fljB (H2) gene, which specifies the synthesis of phase-2 flagellin, can exist in either orientation with respect to fljB. The orientation of the inversion region controls expression of fljB. The hin gene occupies about two-thirds of the inversion region; it is required for the inversion of the fljB controlling region. This is DNA-invertase hin (hin) from Salmonella typhimurium (strain LT2 / SGSC1412 / ATCC 700720).